Consider the following 211-residue polypeptide: Thymidylate kinase (211 aa).

10–17 provides a ligand contact to ATP; that stretch reads GGDGVGKS.

Belongs to the thymidylate kinase family.

It catalyses the reaction dTMP + ATP = dTDP + ADP. In terms of biological role, phosphorylation of dTMP to form dTDP in both de novo and salvage pathways of dTTP synthesis. The polypeptide is Thymidylate kinase (Clavibacter sepedonicus (Clavibacter michiganensis subsp. sepedonicus)).